A 363-amino-acid chain; its full sequence is Putative type I specificity subunit S.MpnORF507P (363 aa).

Belongs to the type-I restriction system S methylase family. As to quaternary structure, the methyltransferase is composed of M and S polypeptides.

Functionally, the specificity (S) subunit of a type I methyltransferase (MTase); this subunit dictates DNA sequence specificity. The single R subunit has multiple frameshifts and is probably not expressed. The polypeptide is Putative type I specificity subunit S.MpnORF507P (Mycoplasma pneumoniae (strain ATCC 29342 / M129 / Subtype 1) (Mycoplasmoides pneumoniae)).